We begin with the raw amino-acid sequence, 485 residues long: Rhamnulokinase (485 aa).

An ATP-binding site is contributed by 11–15; the sequence is ASSGR. Residues Ala79 and 234–236 contribute to the substrate site; that span reads HDT. The active-site Proton acceptor is Asp235. Residue Thr257 coordinates ATP. Asn294 contacts substrate. The ATP site is built by Gln302 and Gly401.

The protein belongs to the rhamnulokinase family. Mg(2+) is required as a cofactor.

It carries out the reaction L-rhamnulose + ATP = L-rhamnulose 1-phosphate + ADP + H(+). Its pathway is carbohydrate degradation; L-rhamnose degradation; glycerone phosphate from L-rhamnose: step 2/3. In terms of biological role, involved in the catabolism of L-rhamnose (6-deoxy-L-mannose). Catalyzes the transfer of the gamma-phosphate group from ATP to the 1-hydroxyl group of L-rhamnulose to yield L-rhamnulose 1-phosphate. The protein is Rhamnulokinase of Ligilactobacillus salivarius (strain UCC118) (Lactobacillus salivarius).